The primary structure comprises 409 residues: Peptidase T (409 aa).

Histidine 78 is a binding site for Zn(2+). The active site involves aspartate 80. Aspartate 140 contacts Zn(2+). Glutamate 173 acts as the Proton acceptor in catalysis. Residues glutamate 174, aspartate 196, and histidine 379 each contribute to the Zn(2+) site.

Belongs to the peptidase M20B family. It depends on Zn(2+) as a cofactor.

The protein localises to the cytoplasm. It carries out the reaction Release of the N-terminal residue from a tripeptide.. Functionally, cleaves the N-terminal amino acid of tripeptides. The sequence is that of Peptidase T from Salmonella paratyphi A (strain ATCC 9150 / SARB42).